A 325-amino-acid chain; its full sequence is Acetyl-coenzyme A carboxylase carboxyl transferase subunit alpha (325 aa).

Positions 35–292 constitute a CoA carboxyltransferase C-terminal domain; that stretch reads EIEKLEARLT…DRVLRASLKQ (258 aa).

This sequence belongs to the AccA family. Acetyl-CoA carboxylase is a heterohexamer composed of biotin carboxyl carrier protein (AccB), biotin carboxylase (AccC) and two subunits each of ACCase subunit alpha (AccA) and ACCase subunit beta (AccD).

The protein resides in the cytoplasm. It catalyses the reaction N(6)-carboxybiotinyl-L-lysyl-[protein] + acetyl-CoA = N(6)-biotinyl-L-lysyl-[protein] + malonyl-CoA. It functions in the pathway lipid metabolism; malonyl-CoA biosynthesis; malonyl-CoA from acetyl-CoA: step 1/1. Component of the acetyl coenzyme A carboxylase (ACC) complex. First, biotin carboxylase catalyzes the carboxylation of biotin on its carrier protein (BCCP) and then the CO(2) group is transferred by the carboxyltransferase to acetyl-CoA to form malonyl-CoA. The polypeptide is Acetyl-coenzyme A carboxylase carboxyl transferase subunit alpha (Geobacillus thermodenitrificans (strain NG80-2)).